The chain runs to 326 residues: 4-hydroxythreonine-4-phosphate dehydrogenase (326 aa).

The substrate site is built by histidine 132 and threonine 133. Histidine 162, histidine 207, and histidine 262 together coordinate a divalent metal cation. Positions 270, 279, and 288 each coordinate substrate.

Belongs to the PdxA family. As to quaternary structure, homodimer. Zn(2+) is required as a cofactor. Requires Mg(2+) as cofactor. Co(2+) serves as cofactor.

The protein resides in the cytoplasm. The catalysed reaction is 4-(phosphooxy)-L-threonine + NAD(+) = 3-amino-2-oxopropyl phosphate + CO2 + NADH. It participates in cofactor biosynthesis; pyridoxine 5'-phosphate biosynthesis; pyridoxine 5'-phosphate from D-erythrose 4-phosphate: step 4/5. Functionally, catalyzes the NAD(P)-dependent oxidation of 4-(phosphooxy)-L-threonine (HTP) into 2-amino-3-oxo-4-(phosphooxy)butyric acid which spontaneously decarboxylates to form 3-amino-2-oxopropyl phosphate (AHAP). In Ruegeria sp. (strain TM1040) (Silicibacter sp.), this protein is 4-hydroxythreonine-4-phosphate dehydrogenase.